The primary structure comprises 287 residues: ATP synthase gamma chain (287 aa).

This sequence belongs to the ATPase gamma chain family. As to quaternary structure, F-type ATPases have 2 components, CF(1) - the catalytic core - and CF(0) - the membrane proton channel. CF(1) has five subunits: alpha(3), beta(3), gamma(1), delta(1), epsilon(1). CF(0) has three main subunits: a, b and c.

It is found in the cell inner membrane. Its function is as follows. Produces ATP from ADP in the presence of a proton gradient across the membrane. The gamma chain is believed to be important in regulating ATPase activity and the flow of protons through the CF(0) complex. The chain is ATP synthase gamma chain from Ruthia magnifica subsp. Calyptogena magnifica.